The following is a 528-amino-acid chain: Transcriptional activator protein UGA3 (528 aa).

Positions 17–44 form a DNA-binding region, zn(2)-C6 fungal-type; sequence CITCKIRKKRCSEDKPVCRDCRRLSFPC. A Nuclear localization signal motif is present at residues 55 to 62; sequence SLKKIKAD.

In terms of assembly, UGA3 proteins associate in oligomers, at least in the presence of inducer.

The protein resides in the nucleus. Functionally, GABA-dependent positive regulation of genes required for catabolism of GABA (UGA4, UGA1, and UGA2). In Saccharomyces cerevisiae (strain ATCC 204508 / S288c) (Baker's yeast), this protein is Transcriptional activator protein UGA3 (UGA3).